A 279-amino-acid chain; its full sequence is DegV domain-containing protein spr1019 (279 aa).

The 274-residue stretch at 4-277 (IKIVTDSSVT…ENAWAILIRY (274 aa)) folds into the DegV domain. Residues Thr-62 and Ser-94 each coordinate hexadecanoate.

Its function is as follows. May bind long-chain fatty acids, such as palmitate, and may play a role in lipid transport or fatty acid metabolism. This Streptococcus pneumoniae (strain ATCC BAA-255 / R6) protein is DegV domain-containing protein spr1019.